We begin with the raw amino-acid sequence, 196 residues long: DnaA initiator-associating protein DiaA (196 aa).

In terms of domain architecture, SIS spans 34 to 196 (LVQSLLNGNK…DSTLFPHQDE (163 aa)).

The protein belongs to the SIS family. DiaA subfamily. As to quaternary structure, homotetramer; dimer of dimers.

In terms of biological role, required for the timely initiation of chromosomal replication via direct interactions with the DnaA initiator protein. This Serratia proteamaculans (strain 568) protein is DnaA initiator-associating protein DiaA.